A 149-amino-acid polypeptide reads, in one-letter code: Transcriptional regulator MraZ (149 aa).

2 consecutive SpoVT-AbrB domains span residues 6-52 and 81-124; these read RSYR…TPED and VEEL…SEEE.

Belongs to the MraZ family. As to quaternary structure, forms oligomers.

It localises to the cytoplasm. It is found in the nucleoid. The sequence is that of Transcriptional regulator MraZ from Oleidesulfovibrio alaskensis (strain ATCC BAA-1058 / DSM 17464 / G20) (Desulfovibrio alaskensis).